The chain runs to 146 residues: Ribonuclease H (146 aa).

The RNase H type-1 domain occupies 4–145 (ELNKVVVYTD…ADMLARSQIV (142 aa)). Mg(2+) contacts are provided by aspartate 13, glutamate 51, aspartate 73, and aspartate 137.

This sequence belongs to the RNase H family. As to quaternary structure, monomer. The cofactor is Mg(2+).

The protein localises to the cytoplasm. It carries out the reaction Endonucleolytic cleavage to 5'-phosphomonoester.. Functionally, endonuclease that specifically degrades the RNA of RNA-DNA hybrids. The polypeptide is Ribonuclease H (Ehrlichia ruminantium (strain Gardel)).